Consider the following 21-residue polypeptide: Nigrocin-2GRb (21 aa).

As to expression, expressed by the skin glands.

It is found in the secreted. Its function is as follows. Antimicrobial peptide active against the Gram-positive bacterium S.aureus (MIC=12.5 uM) and against the Gram-negative bacteria E.coli (MIC=3 uM). Has antifungal activity against C.albicans (MIC=50 uM). Has some hemolytic activity against human erythrocytes (LC(50)=40 uM). The sequence is that of Nigrocin-2GRb from Odorrana grahami (Yunnanfu frog).